Reading from the N-terminus, the 764-residue chain is A-type ATP synthase subunit A (764 aa).

The protein belongs to the ATPase alpha/beta chains family. As to quaternary structure, has multiple subunits with at least A(3), B(3), C, D, E, F, H, I and proteolipid K(x). This protein undergoes a protein self splicing that involves a post-translational excision of the VDE intervening region (intein) followed by peptide ligation.

Its subcellular location is the cell membrane. The enzyme catalyses ATP + H2O + 4 H(+)(in) = ADP + phosphate + 5 H(+)(out). Functionally, component of the A-type ATP synthase that produces ATP from ADP in the presence of a proton gradient across the membrane. The A chain is the catalytic subunit. This is A-type ATP synthase subunit A from Thermoplasma acidophilum (strain ATCC 25905 / DSM 1728 / JCM 9062 / NBRC 15155 / AMRC-C165).